A 100-amino-acid polypeptide reads, in one-letter code: Large ribosomal subunit protein uL23 (100 aa).

This sequence belongs to the universal ribosomal protein uL23 family. As to quaternary structure, part of the 50S ribosomal subunit. Contacts protein L29, and trigger factor when it is bound to the ribosome.

Functionally, one of the early assembly proteins it binds 23S rRNA. One of the proteins that surrounds the polypeptide exit tunnel on the outside of the ribosome. Forms the main docking site for trigger factor binding to the ribosome. The chain is Large ribosomal subunit protein uL23 from Novosphingobium aromaticivorans (strain ATCC 700278 / DSM 12444 / CCUG 56034 / CIP 105152 / NBRC 16084 / F199).